Consider the following 518-residue polypeptide: Probable lysine--tRNA ligase, cytoplasmic (518 aa).

Belongs to the class-II aminoacyl-tRNA synthetase family. Homodimer.

Its subcellular location is the cytoplasm. The enzyme catalyses tRNA(Lys) + L-lysine + ATP = L-lysyl-tRNA(Lys) + AMP + diphosphate. This chain is Probable lysine--tRNA ligase, cytoplasmic, found in Enterocytozoon bieneusi (strain H348) (Microsporidian parasite).